Here is a 463-residue protein sequence, read N- to C-terminus: Argininosuccinate lyase (463 aa).

It belongs to the lyase 1 family. Argininosuccinate lyase subfamily.

It localises to the cytoplasm. It catalyses the reaction 2-(N(omega)-L-arginino)succinate = fumarate + L-arginine. It participates in amino-acid biosynthesis; L-arginine biosynthesis; L-arginine from L-ornithine and carbamoyl phosphate: step 3/3. The chain is Argininosuccinate lyase from Streptococcus pneumoniae (strain JJA).